Consider the following 751-residue polypeptide: Disintegrin and metalloproteinase domain-containing protein 2 (751 aa).

The signal sequence occupies residues M1–T16. Positions K17–R173 are excised as a propeptide. At K17–R702 the chain is on the extracellular side. Residues N122, N147, N219, and N289 are each glycosylated (N-linked (GlcNAc...) asparagine). Residues Q177–P374 enclose the Peptidase M12B domain. Disulfide bonds link C286–C369, C328–C353, and C330–C335. Residues N352, N434, N458, N559, and N566 are each glycosylated (N-linked (GlcNAc...) asparagine). The Disintegrin domain occupies D383–N472. Cysteines 444 and 464 form a disulfide. One can recognise an EGF-like domain in the interval V612 to S645. Disulfide bonds link C616-C627, C621-C633, and C635-C644. N643 carries N-linked (GlcNAc...) asparagine glycosylation. Residues W703–V723 form a helical membrane-spanning segment. The Cytoplasmic segment spans residues K724–E751. S745 is subject to Phosphoserine.

In terms of assembly, heterodimer with ADAM1/fertilin subunit alpha. Post-translationally, the signal and the metalloprotease domain are cleaved during the epididymal maturation of the spermatozoa. Expressed specifically in testis.

Its subcellular location is the membrane. Its function is as follows. Sperm surface membrane protein that may be involved in sperm-egg plasma membrane adhesion and fusion during fertilization. Could have a direct role in sperm-zona binding or migration of sperm from the uterus into the oviduct. Interactions with egg membrane could be mediated via binding between its disintegrin-like domain to one or more integrins receptors on the egg. This is a non catalytic metalloprotease-like protein. The chain is Disintegrin and metalloproteinase domain-containing protein 2 (ADAM2) from Oryctolagus cuniculus (Rabbit).